Consider the following 160-residue polypeptide: Small ribosomal subunit protein uS7 (160 aa).

The protein belongs to the universal ribosomal protein uS7 family. Part of the 30S ribosomal subunit. Contacts proteins S9 and S11.

In terms of biological role, one of the primary rRNA binding proteins, it binds directly to 16S rRNA where it nucleates assembly of the head domain of the 30S subunit. Is located at the subunit interface close to the decoding center, probably blocks exit of the E-site tRNA. This chain is Small ribosomal subunit protein uS7, found in Rickettsia typhi (strain ATCC VR-144 / Wilmington).